A 737-amino-acid chain; its full sequence is DNA polymerase iota (737 aa).

Residues 17-231 (IIHLDMDYFY…GDLKRVTGIG (215 aa)) form the UmuC domain. Aspartate 21 contributes to the Mg(2+) binding site. 2 residues coordinate a 2'-deoxyribonucleoside 5'-triphosphate: tyrosine 26 and arginine 58. Residue aspartate 113 participates in Mg(2+) binding. Glutamate 114 is a catalytic residue. DNA-binding stretches follow at residues 212–277 (TYAE…FGRD) and 288–413 (KTIG…SKFQ). 4 disordered regions span residues 443–464 (TSLT…RSSP), 482–515 (SPVP…SPKK), 557–581 (DSEK…RFRT), and 607–643 (LSSN…PSPT). Residues 491 to 502 (GSESAATNSDFS) are compositionally biased toward polar residues. 3 stretches are compositionally biased toward low complexity: residues 563 to 577 (PMST…APAP), 607 to 618 (LSSNASSTASSP), and 632 to 643 (PSTTTLPFPSPT). Positions 669 to 686 (VDAEVFKELPVELQTELI) match the Ubiquitin-binding (UBM) motif.

This sequence belongs to the DNA polymerase type-Y family. Requires Mg(2+) as cofactor. The cofactor is Mn(2+).

The protein resides in the nucleus. It catalyses the reaction DNA(n) + a 2'-deoxyribonucleoside 5'-triphosphate = DNA(n+1) + diphosphate. In terms of biological role, error-prone DNA polymerase specifically involved in DNA repair. Plays an important role in translesion synthesis, where the normal high-fidelity DNA polymerases cannot proceed and DNA synthesis stalls. Favors Hoogsteen base-pairing in the active site. Inserts the correct base with higher fidelity opposite an adenosine template. Exhibits low fidelity and efficiency opposite a thymidine template, where it will preferentially insert guanosine. Forms a Schiff base with 5'-deoxyribose phosphate at abasic sites, but may not have lyase activity. The chain is DNA polymerase iota from Drosophila melanogaster (Fruit fly).